We begin with the raw amino-acid sequence, 194 residues long: ATP-dependent Clp protease proteolytic subunit (194 aa).

S98 functions as the Nucleophile in the catalytic mechanism. Residue H123 is part of the active site.

Belongs to the peptidase S14 family. As to quaternary structure, fourteen ClpP subunits assemble into 2 heptameric rings which stack back to back to give a disk-like structure with a central cavity, resembling the structure of eukaryotic proteasomes.

The protein localises to the cytoplasm. It catalyses the reaction Hydrolysis of proteins to small peptides in the presence of ATP and magnesium. alpha-casein is the usual test substrate. In the absence of ATP, only oligopeptides shorter than five residues are hydrolyzed (such as succinyl-Leu-Tyr-|-NHMec, and Leu-Tyr-Leu-|-Tyr-Trp, in which cleavage of the -Tyr-|-Leu- and -Tyr-|-Trp bonds also occurs).. Its function is as follows. Cleaves peptides in various proteins in a process that requires ATP hydrolysis. Has a chymotrypsin-like activity. Plays a major role in the degradation of misfolded proteins. In Aliarcobacter butzleri (strain RM4018) (Arcobacter butzleri), this protein is ATP-dependent Clp protease proteolytic subunit.